Reading from the N-terminus, the 117-residue chain is Peptidyl-tRNA hydrolase (117 aa).

The protein belongs to the PTH2 family.

The protein localises to the cytoplasm. It carries out the reaction an N-acyl-L-alpha-aminoacyl-tRNA + H2O = an N-acyl-L-amino acid + a tRNA + H(+). Its function is as follows. The natural substrate for this enzyme may be peptidyl-tRNAs which drop off the ribosome during protein synthesis. This chain is Peptidyl-tRNA hydrolase, found in Thermoplasma acidophilum (strain ATCC 25905 / DSM 1728 / JCM 9062 / NBRC 15155 / AMRC-C165).